The primary structure comprises 875 residues: Alanine--tRNA ligase (875 aa).

The Zn(2+) site is built by His-563, His-567, Cys-665, and His-669.

The protein belongs to the class-II aminoacyl-tRNA synthetase family. Zn(2+) is required as a cofactor.

It localises to the cytoplasm. The catalysed reaction is tRNA(Ala) + L-alanine + ATP = L-alanyl-tRNA(Ala) + AMP + diphosphate. Functionally, catalyzes the attachment of alanine to tRNA(Ala) in a two-step reaction: alanine is first activated by ATP to form Ala-AMP and then transferred to the acceptor end of tRNA(Ala). Also edits incorrectly charged Ser-tRNA(Ala) and Gly-tRNA(Ala) via its editing domain. The chain is Alanine--tRNA ligase from Desulfitobacterium hafniense (strain Y51).